The sequence spans 160 residues: Cytochrome c-type biogenesis protein CcmE (160 aa).

Residues 1 to 8 (MNPRRKQR) lie on the Cytoplasmic side of the membrane. The chain crosses the membrane as a helical; Signal-anchor for type II membrane protein span at residues 9-29 (LTWVAILVIGVSVATGLMLYA). The Periplasmic segment spans residues 30–160 (LSQSIDLFYT…PNTVEKGEGQ (131 aa)). His130 and Tyr134 together coordinate heme.

This sequence belongs to the CcmE/CycJ family.

It localises to the cell inner membrane. In terms of biological role, heme chaperone required for the biogenesis of c-type cytochromes. Transiently binds heme delivered by CcmC and transfers the heme to apo-cytochromes in a process facilitated by CcmF and CcmH. The chain is Cytochrome c-type biogenesis protein CcmE from Idiomarina loihiensis (strain ATCC BAA-735 / DSM 15497 / L2-TR).